Here is a 290-residue protein sequence, read N- to C-terminus: HTH-type transcriptional regulator BsdA (290 aa).

Residues 1 to 59 (MDIRQLRYFITIAQEQKITSAAKKLHMAQPPLSRQLKQLEDELGVVLFDRNKKKQMTLT) enclose the HTH lysR-type domain. A DNA-binding region (H-T-H motif) is located at residues 18–37 (ITSAAKKLHMAQPPLSRQLK).

The protein belongs to the LysR transcriptional regulatory family.

In terms of biological role, could be a positive regulator of bsdBCD expression in response to salicylic acid. This Bacillus subtilis (strain 168) protein is HTH-type transcriptional regulator BsdA (bsdA).